The chain runs to 1218 residues: Sodium bicarbonate cotransporter 3 (1218 aa).

Disordered stretches follow at residues 1–31 (MEAD…KTSS) and 53–99 (HVPF…SQRV). The Extracellular portion of the chain corresponds to 1–612 (MEADGAGEQM…DFKDALSLQC (612 aa)). Phosphoserine is present on residues S57, S60, S89, and S155. Basic residues predominate over residues 60-77 (SRRRHRHRGHKHHHRRRK). Over residues 78–90 (DKDSDKEDGRESP) the composition is skewed to basic and acidic residues. N176 is a glycosylation site (N-linked (GlcNAc...) asparagine). Residues S238, S247, and R263 each carry the phosphoserine modification. N274 is a glycosylation site (N-linked (GlcNAc...) asparagine). Disordered regions lie at residues 294–350 (SRAG…DIPR), 364–412 (KGQE…ENST), and 536–577 (SIRI…HAGP). Positions 308–318 (VPTPQNSPPSS) are enriched in pro residues. Residues 319–337 (PSLSRLTSRSSQQTQPQAP) show a composition bias toward low complexity. Polar residues predominate over residues 383–396 (SPQSAPGNLDSSKS). Residues S386, S404, and S407 each carry the phosphoserine modification. N410 carries an N-linked (GlcNAc...) asparagine glycan. Phosphoserine is present on residues S411 and S560. Basic and acidic residues predominate over residues 567–576 (PPKEADHHAG). A helical membrane pass occupies residues 613-633 (LASILFLYCACMSPVITFGGL). The Cytoplasmic segment spans residues 634-641 (LGEATEGR). Residues 642 to 662 (ISAIESLFGASLTGIAYSLFA) form a helical membrane-spanning segment. Over 663–699 (GQPLTILGSTGPVLVFEKILFKFCRDYHLSYLSLRTS) the chain is Extracellular. A helical transmembrane segment spans residues 700–720 (IGLWTSFLCIVLVATDASSLV). Residues 721-729 (CYITRFTEE) lie on the Cytoplasmic side of the membrane. Residues 730-750 (AFAALICIIFIYEALEKLFHL) traverse the membrane as a helical segment. The Extracellular portion of the chain corresponds to 751–821 (GEIYAFNMHN…MFVGSACGPH (71 aa)). C770 and C772 form a disulfide bridge. N-linked (GlcNAc...) asparagine glycans are attached at residues N780, N790, and N800. C806 and C818 are oxidised to a cystine. Residues 822 to 842 (GPYVPDVLFWCVVLFFTTFFL) traverse the membrane as a helical segment. Over 843 to 865 (SSFLKQFKTKRYFPTKVRSTISD) the chain is Cytoplasmic. A helical membrane pass occupies residues 866–886 (FAVFLTIVIMVAIDYLVGIPS). Topologically, residues 887–912 (PKLHVPEKFEPTDPSRGWIISPLGDN) are extracellular. A helical membrane pass occupies residues 913–933 (PWWTLLIAAVPALLCTILIFM). Topologically, residues 934–958 (DQQITAVIINRKEHKLKKGAGYHLD) are cytoplasmic. A helical transmembrane segment spans residues 959–979 (LLMVAVMLGVCSIMGLPWFVA). At 980–1015 (ATVLSISHVNSLKVESECSAPGEQPKFLGIREQRVT) the chain is on the extracellular side. Residues 1012-1135 (QRVTGLMIFI…MDLCFTKREL (124 aa)) are essential for cell membrane localization and transport activity. Residues 1016–1036 (GLMIFILMGLSVFMTSVLKFI) form a helical membrane-spanning segment. The Cytoplasmic portion of the chain corresponds to 1037–1038 (PM). The helical transmembrane segment at 1039-1059 (PVLYGVFLYMGVSSLKGIQFF) threads the bilayer. Over 1060–1096 (DRIKLFGMPAKHQPDLIYLRYVPLWKVHVFTVVQLTC) the chain is Extracellular. Phosphoserine is present on residues M1067 and L1078. The chain crosses the membrane as a helical span at residues 1097 to 1117 (LVLLWVIKASAAAVVFPMMVL). Residues 1118–1140 (ALVFVRKLMDLCFTKRELSWLDD) are essential for interaction with RACK1. Topologically, residues 1118–1218 (ALVFVRKLMD…KKYMDAETSL (101 aa)) are cytoplasmic. The CA2-binding stretch occupies residues 1138 to 1140 (LDD). Residues 1148–1165 (KKEDDKKKKEKEEAERML) show a composition bias toward basic and acidic residues. The tract at residues 1148–1172 (KKEDDKKKKEKEEAERMLQGDGDTV) is disordered. Phosphothreonine is present on T1171. Phosphoserine occurs at positions 1180, 1188, 1201, and 1217. The PDZ-binding motif lies at 1215-1218 (ETSL).

This sequence belongs to the anion exchanger (TC 2.A.31) family. Interacts with USH1C. Forms a complex with ATP6V1B1 and NHERF1/EBP50. Interacts in a pH dependent-manner with CA2/carbonic anhydrase 2. Interacts with CFTR probably through NHERF1/EBP50. In terms of assembly, interacts with RACK1. Undergoes lysosome-mediated degradation. In terms of processing, N-glycosylated. Expressed in aorta, ventricles, atrium, mesenteric artery, kidney, spleen, duodenum, jejunum, ileum, colon, lung, trachea, gastric fundus and pylorus, cerebrum, cerebellum, pancreas, liver, parotid gland, and epididymis. Expressed in the inner ear by cochlear outer and inner hair cells (at protein level). Highly expressed in testis and spleen. In terms of tissue distribution, specifically expressed in kidney. As to expression, specifically expressed in hippocampal neurons.

The protein localises to the basolateral cell membrane. The protein resides in the apical cell membrane. It is found in the cell projection. Its subcellular location is the stereocilium. It localises to the cell membrane. The enzyme catalyses hydrogencarbonate(in) + Na(+)(in) = hydrogencarbonate(out) + Na(+)(out). With respect to regulation, insensitive to stilbene derivatives. Its function is as follows. Electroneutral sodium- and bicarbonate-dependent cotransporter with a Na(+):HCO3(-) 1:1 stoichiometry. Mediates the sodium-dependent bicarbonate transport important for pH recovery after acid load as well as for regulation of steady-state pH in the duodenum and vascular smooth muscle cells. Plays a key role in macrophage acidification, mediating bicarbonate import into the cytoplasm which is crucial for net acid extrusion and maintenance of cytoplasmic pH during phagocytosis. Provides cellular bicarbonate for de novo purine and pyrimidine synthesis and is a key mediator of de novo nucleotide synthesis downstream of mTORC1 signaling in proliferating cells. This is Sodium bicarbonate cotransporter 3 (Slc4a7) from Rattus norvegicus (Rat).